We begin with the raw amino-acid sequence, 384 residues long: MSSVPAPREYFLDSIRAWLMLLGIPFHISLIYSTHSWHVNSATPSWWLTLFNDFIHAFRMQVFFVISGYFSYMLFLRYPLKRWWKVRVERVGIPMLTAIPLLTLPQFILLQYVKEKTENWPTLSAYEKYNTLAWELISHLWFLLVLVILTTVSIGIFTWFQKRQETSKPRPAAISLAKLSLIFFLLGVAYAAIRRIIFIVYPAILSDGMFNFIVMQTLFYVPFFILGALAFIHPDLKARFTTPSRGCTLGAAVAFIAYLLNQRYGSGDAWMYETESVITMVMGLWMVNVVFSLGHRLLNFQSARVTYFVNASLFIYLVHHPLTLFFGAYITPHISSNLIGFLCGLIFVMGIALILYEIHLRIPLLKFLFSGKPPVKQESRAAIG.

10 helical membrane passes run 17–37 (AWLM…THSW), 54–74 (FIHA…SYML), 91–111 (VGIP…ILLQ), 140–160 (LWFL…FTWF), 173–193 (AISL…YAAI), 212–232 (FIVM…LAFI), 240–260 (FTTP…AYLL), 274–294 (TESV…FSLG), 311–331 (ASLF…AYIT), and 338–358 (LIGF…LYEI).

It belongs to the acyltransferase 3 family. OpgC subfamily.

It is found in the cell membrane. Its pathway is glycan metabolism; osmoregulated periplasmic glucan (OPG) biosynthesis. Necessary for the succinyl substitution of periplasmic glucans. Could catalyze the transfer of succinyl residues from the cytoplasmic side of the membrane to the nascent glucan backbones on the periplasmic side of the membrane. The protein is Glucans biosynthesis protein C of Salmonella heidelberg (strain SL476).